The following is a 248-amino-acid chain: Triosephosphate isomerase (248 aa).

Residues Asn11 and Lys13 each coordinate substrate. His95 acts as the Electrophile in catalysis. The active-site Proton acceptor is Glu165.

It belongs to the triosephosphate isomerase family. In terms of assembly, homodimer.

The protein localises to the cytoplasm. The enzyme catalyses dihydroxyacetone phosphate = methylglyoxal + phosphate. It carries out the reaction D-glyceraldehyde 3-phosphate = dihydroxyacetone phosphate. Its pathway is carbohydrate degradation; glycolysis; D-glyceraldehyde 3-phosphate from glycerone phosphate: step 1/1. It participates in carbohydrate biosynthesis; gluconeogenesis. Functionally, triosephosphate isomerase is an extremely efficient metabolic enzyme that catalyzes the interconversion between dihydroxyacetone phosphate (DHAP) and D-glyceraldehyde-3-phosphate (G3P) in glycolysis and gluconeogenesis. It is also responsible for the non-negligible production of methylglyoxal a reactive cytotoxic side-product that modifies and can alter proteins, DNA and lipids. The polypeptide is Triosephosphate isomerase (tpi1) (Xenopus tropicalis (Western clawed frog)).